The sequence spans 346 residues: UDP-3-O-acylglucosamine N-acyltransferase (346 aa).

H253 functions as the Proton acceptor in the catalytic mechanism.

It belongs to the transferase hexapeptide repeat family. LpxD subfamily. Homotrimer.

It carries out the reaction a UDP-3-O-[(3R)-3-hydroxyacyl]-alpha-D-glucosamine + a (3R)-hydroxyacyl-[ACP] = a UDP-2-N,3-O-bis[(3R)-3-hydroxyacyl]-alpha-D-glucosamine + holo-[ACP] + H(+). Its pathway is bacterial outer membrane biogenesis; LPS lipid A biosynthesis. Functionally, catalyzes the N-acylation of UDP-3-O-acylglucosamine using 3-hydroxyacyl-ACP as the acyl donor. Is involved in the biosynthesis of lipid A, a phosphorylated glycolipid that anchors the lipopolysaccharide to the outer membrane of the cell. The protein is UDP-3-O-acylglucosamine N-acyltransferase of Rickettsia peacockii (strain Rustic).